The following is a 246-amino-acid chain: Pyridoxine 5'-phosphate synthase (246 aa).

Asn12 serves as a coordination point for 3-amino-2-oxopropyl phosphate. 14–15 (DH) contributes to the 1-deoxy-D-xylulose 5-phosphate binding site. Arg23 contacts 3-amino-2-oxopropyl phosphate. The active-site Proton acceptor is His48. Arg50 and His55 together coordinate 1-deoxy-D-xylulose 5-phosphate. Residue Glu75 is the Proton acceptor of the active site. Thr105 contributes to the 1-deoxy-D-xylulose 5-phosphate binding site. His196 (proton donor) is an active-site residue. Residues Gly197 and 218-219 (GH) each bind 3-amino-2-oxopropyl phosphate.

Belongs to the PNP synthase family. As to quaternary structure, homooctamer; tetramer of dimers.

The protein resides in the cytoplasm. It catalyses the reaction 3-amino-2-oxopropyl phosphate + 1-deoxy-D-xylulose 5-phosphate = pyridoxine 5'-phosphate + phosphate + 2 H2O + H(+). The protein operates within cofactor biosynthesis; pyridoxine 5'-phosphate biosynthesis; pyridoxine 5'-phosphate from D-erythrose 4-phosphate: step 5/5. Functionally, catalyzes the complicated ring closure reaction between the two acyclic compounds 1-deoxy-D-xylulose-5-phosphate (DXP) and 3-amino-2-oxopropyl phosphate (1-amino-acetone-3-phosphate or AAP) to form pyridoxine 5'-phosphate (PNP) and inorganic phosphate. This is Pyridoxine 5'-phosphate synthase from Pseudomonas savastanoi pv. phaseolicola (strain 1448A / Race 6) (Pseudomonas syringae pv. phaseolicola (strain 1448A / Race 6)).